The chain runs to 323 residues: Estradiol 17 beta-dehydrogenase 5 (323 aa).

NADP(+) is bound by residues 20–24 (GFGTY) and aspartate 50. Tyrosine 55 functions as the Proton donor in the catalytic mechanism. A substrate-binding site is contributed by histidine 117. Residues 166 to 167 (SN), glutamine 190, 216 to 221 (YSALGS), and 270 to 280 (KSFSEKRIKEN) contribute to the NADP(+) site.

This sequence belongs to the aldo/keto reductase family. Monomer. In terms of processing, three forms are detected, probably due to post-translational modifications. Mainly found in liver. Also expressed weakly in kidney.

Functionally, active toward androgens, estrogens, and xenobiotic substrates. Also exhibits low 20 alpha-HSD activity. Shows a-stereospecificity in hydrogen transfer between cofactors and substrates (A-specific). Preferentially catalyzes the reduction of 4-androstenedione, 5-alpha-androstane-3,17-dione, androsterone and dehydroepiandrosterone to testosterone, dihydrotestosterone, 5-alpha-androstane-3-alpha,17-beta-diol and 5-androstene-3-beta,17-beta-diol, respectively. This is Estradiol 17 beta-dehydrogenase 5 (Akr1c6) from Mus musculus (Mouse).